The primary structure comprises 236 residues: Sugar fermentation stimulation protein homolog (236 aa).

This sequence belongs to the SfsA family.

The chain is Sugar fermentation stimulation protein homolog from Desulfotalea psychrophila (strain LSv54 / DSM 12343).